The primary structure comprises 250 residues: Intermembrane phospholipid transport system lipoprotein MlaA (250 aa).

The first 18 residues, 1 to 18 (MKTKTILTALLSAIALTG), serve as a signal peptide directing secretion. Residue cysteine 19 is the site of N-palmitoyl cysteine attachment. The S-diacylglycerol cysteine moiety is linked to residue cysteine 19.

This sequence belongs to the MlaA family.

Its subcellular location is the cell outer membrane. Involved in a phospholipid transport pathway that maintains lipid asymmetry in the outer membrane by retrograde trafficking of phospholipids from the outer membrane to the inner membrane. This Haemophilus influenzae (strain ATCC 51907 / DSM 11121 / KW20 / Rd) protein is Intermembrane phospholipid transport system lipoprotein MlaA.